Here is a 272-residue protein sequence, read N- to C-terminus: Energy-coupling factor transporter ATP-binding protein EcfA1 (272 aa).

One can recognise an ABC transporter domain in the interval 2–237; it reads IKVSDVCFSY…KNIIEKAKID (236 aa). ATP is bound at residue 37–44; it reads GHNGSGKS.

It belongs to the ABC transporter superfamily. Energy-coupling factor EcfA family. In terms of assembly, forms a stable energy-coupling factor (ECF) transporter complex composed of 2 membrane-embedded substrate-binding proteins (S component), 2 ATP-binding proteins (A component) and 2 transmembrane proteins (T component).

The protein resides in the cell membrane. ATP-binding (A) component of a common energy-coupling factor (ECF) ABC-transporter complex. Unlike classic ABC transporters this ECF transporter provides the energy necessary to transport a number of different substrates. The sequence is that of Energy-coupling factor transporter ATP-binding protein EcfA1 from Mesomycoplasma hyopneumoniae (strain 7448) (Mycoplasma hyopneumoniae).